A 125-amino-acid chain; its full sequence is RutC family protein aq_364 (125 aa).

It belongs to the RutC family.

This is RutC family protein aq_364 from Aquifex aeolicus (strain VF5).